The sequence spans 627 residues: Muscarinic acetylcholine receptor gar-2 (627 aa).

Residues 1–9 lie on the Extracellular side of the membrane; it reads MAVASVLLA. Residues 10–30 form a helical membrane-spanning segment; the sequence is LFMLFLSIVTVIGNLAVLLSY. Over 31–41 the chain is Cytoplasmic; the sequence is YLDKNIRQPTN. Residues 42–62 form a helical membrane-spanning segment; it reads YFIFSLAISDLLIGLEGIPVY. Over 63–81 the chain is Extracellular; the sequence is TAFYLNNNEWIWGDVLCDL. A disulfide bridge connects residues C79 and C160. A helical transmembrane segment spans residues 82–102; the sequence is WLSIDYIVCLASIYTVLGITV. Over 103-122 the chain is Cytoplasmic; sequence DRYYSVKKPATYRNWRTPGR. A helical transmembrane segment spans residues 123 to 143; the sequence is VVLIIIFIWLVPSILFSVSIF. Residues 144–172 lie on the Extracellular side of the membrane; the sequence is GYGTFTGTGRILKETECYVQFMTNPYLNM. Residues 173–193 traverse the membrane as a helical segment; the sequence is GMYISYYWTTLFVMLYLYWGI. At 194–549 the chain is on the cytoplasmic side; that stretch reads YRAAKKLALK…ENRARKALRT (356 aa). Disordered regions lie at residues 222 to 266, 423 to 442, and 449 to 475; these read VSVR…VGTP, REDE…ENGG, and ANDE…HDPN. Positions 231–264 are enriched in low complexity; sequence NSSSDSPNDTSNSSKCFRTAPPTTTVQTTQTNVG. The span at 459 to 475 shows a compositional bias: basic and acidic residues; it reads KESEQKEEMTPENHDPN. Residues 550-570 traverse the membrane as a helical segment; it reads ITFILGSFIILWTPFYVLATI. Over 571-586 the chain is Extracellular; sequence YGFCETCKASPSFNTL. A helical transmembrane segment spans residues 587 to 609; it reads YTISYYLCYMNSPLNPFCYAMAN. Over 610–627 the chain is Cytoplasmic; the sequence is QQFKKTLTRIFKGDFRRV.

Belongs to the G-protein coupled receptor 1 family. Muscarinic acetylcholine receptor subfamily. As to expression, expressed in putative sensory neurons, many cells of the ventral cord and in the HSN motor neurons. Expressed in some cholinergic motor neurons and GABAergic motor neurons, which are the two major types of ventral cord motor neurons.

Its subcellular location is the cell membrane. It localises to the cell projection. The protein resides in the axon. Its function is as follows. The muscarinic acetylcholine receptor mediates various cellular responses, including inhibition of adenylate cyclase, breakdown of phosphoinositides and modulation of potassium channels through the action of G proteins. Primary transducing effect is Pi turnover. Regulates the activity of ventral cord motor neurons. Couples to the G(o)-alpha G-protein subunit goa-1 to negatively regulate cholinergic receptor activity in the presence of high levels of the neurotransmitter acetylcholine in ventral cord motor neurons. As acetylcholine depolarizes body wall muscles, modulation of acetylcholine levels most likely results in the control locomotory behavior and egg-laying. This Caenorhabditis elegans protein is Muscarinic acetylcholine receptor gar-2.